A 415-amino-acid polypeptide reads, in one-letter code: Multidrug resistance protein MdtA (415 aa).

An N-terminal signal peptide occupies residues 1–21 (MKGSYKSRWVIVIVVVIAAIA). The span at 31-47 (DSQSAAPGATKQAQQSP) shows a compositional bias: polar residues. Disordered regions lie at residues 31–60 (DSQS…GPLA) and 392–415 (EAQS…GARS). Basic and acidic residues predominate over residues 399-415 (SEEKATSREYAKKGARS).

Belongs to the membrane fusion protein (MFP) (TC 8.A.1) family. As to quaternary structure, part of a tripartite efflux system composed of MdtA, MdtB and MdtC.

It localises to the cell inner membrane. Its function is as follows. The MdtABC tripartite complex confers resistance against novobiocin and deoxycholate. The sequence is that of Multidrug resistance protein MdtA from Escherichia coli O139:H28 (strain E24377A / ETEC).